We begin with the raw amino-acid sequence, 212 residues long: Glutathione S-transferase (212 aa).

Residues 1-82 (MGMKLHGPAM…YIAHTYADKG (82 aa)) enclose the GST N-terminal domain. Glutathione contacts are provided by residues S11, 12 to 13 (PA), 40 to 41 (HK), 53 to 54 (QV), and 66 to 67 (ES). The GST C-terminal domain maps to 89-212 (DPKKMAIMSV…AWSKAIEYKQ (124 aa)).

This sequence belongs to the GST superfamily. Phi family.

The catalysed reaction is RX + glutathione = an S-substituted glutathione + a halide anion + H(+). Conjugation of reduced glutathione to a wide number of exogenous and endogenous hydrophobic electrophiles. The sequence is that of Glutathione S-transferase from Hyoscyamus muticus (Egyptian henbane).